Consider the following 686-residue polypeptide: MAKNEDLILTIDSDAEYDNISESSEEEAEEAVSVKSKKKNNNNNNNKKSKAGKHGKANLEEAEAEEDDDEARGEMNLDFQFSLGDDLNEIKDWEVEEPAKDIDLNEIIKKKRESKKDGNGDDEEDDGDEDEDASESEEDDEKEELKAAGKNGQAGDDDEDENEDEDEEEEVDTKEDLDNFYESQETNTSASALKSKTFQELQLSRPILKSLQQLGFTVPTPVQASTIPIALLGKDIVASAQTGSGKTAAYLIPIIERLLYVKNSTSTKAIILTPTRELAIQVHDVGRKLGQFVSNLNFGMAVGGLSLKQQEQQLKTRPDIVIATPGRLIDHIRNSPSFSVEDVQVLIIDEADRMLEEGFQEELTEILSLIPKQKRQTLLFSATMNNTKIQDLVQLSLNKPIKVSIDPPRTVASKLEQQFVRIRKREELKPAVLYLLLKKLEGRTVVFTRTKVEAHKLRIILGLLGLTVAELHGALTQEQRLANVKAFKNNVNVLICTDLAARGLDIRIEYVINYDMPKTYEIYTHRVGRTARAGRKGTSISFVGESMQDRNIVKNAIQFNSRSVARKIDWDEVEKIQTKIKLNEGAIEEVIEEEKQAREIMRAEMQLNKAENLMKYEKEIKSRPKRTWFKSEVMEHLTKHGKKVNAKKRKANEERKEEGKERSYKKTKADRTKLKTKAKSSSKKRK.

A compositionally biased stretch (acidic residues) spans 17–30; it reads YDNISESSEEEAEE. Disordered stretches follow at residues 17–77 and 94–192; these read YDNI…EMNL and EVEE…SASA. The span at 47–56 shows a compositional bias: basic residues; sequence KKSKAGKHGK. The segment covering 60–71 has biased composition (acidic residues); sequence EEAEAEEDDDEA. Basic and acidic residues predominate over residues 94-119; sequence EVEEPAKDIDLNEIIKKKRESKKDGN. Acidic residues-rich tracts occupy residues 120-142 and 155-179; these read GDDEEDDGDEDEDASESEEDDEK and GDDDEDENEDEDEEEEVDTKEDLDN. Residues 181 to 192 show a composition bias toward polar residues; it reads YESQETNTSASA. Positions 196 to 224 match the Q motif motif; it reads KTFQELQLSRPILKSLQQLGFTVPTPVQA. Residues 227–402 enclose the Helicase ATP-binding domain; it reads IPIALLGKDI…VQLSLNKPIK (176 aa). ATP is bound at residue 240 to 247; sequence AQTGSGKT. Residues 349 to 352 carry the DEAD box motif; sequence DEAD. One can recognise a Helicase C-terminal domain in the interval 414 to 581; it reads KLEQQFVRIR…EVEKIQTKIK (168 aa). A coiled-coil region spans residues 586 to 666; it reads AIEEVIEEEK…EEGKERSYKK (81 aa). The segment at 638–686 is disordered; it reads TKHGKKVNAKKRKANEERKEEGKERSYKKTKADRTKLKTKAKSSSKKRK. The span at 639–650 shows a compositional bias: basic residues; it reads KHGKKVNAKKRK. Over residues 651–673 the composition is skewed to basic and acidic residues; it reads ANEERKEEGKERSYKKTKADRTK. A compositionally biased stretch (basic residues) spans 674 to 686; it reads LKTKAKSSSKKRK.

The protein belongs to the DEAD box helicase family. DDX27/DRS1 subfamily. As to quaternary structure, associates with pre-ribosomal particles.

It localises to the nucleus. Its subcellular location is the nucleolus. It carries out the reaction ATP + H2O = ADP + phosphate + H(+). ATP-binding RNA helicase involved in ribosome assembly. This Lodderomyces elongisporus (strain ATCC 11503 / CBS 2605 / JCM 1781 / NBRC 1676 / NRRL YB-4239) (Yeast) protein is ATP-dependent RNA helicase DRS1 (DRS1).